The sequence spans 282 residues: Bifunctional protein FolD (282 aa).

NADP(+) is bound by residues 165-167, Ser190, and Thr231; that span reads GRS.

It belongs to the tetrahydrofolate dehydrogenase/cyclohydrolase family. In terms of assembly, homodimer.

It catalyses the reaction (6R)-5,10-methylene-5,6,7,8-tetrahydrofolate + NADP(+) = (6R)-5,10-methenyltetrahydrofolate + NADPH. The enzyme catalyses (6R)-5,10-methenyltetrahydrofolate + H2O = (6R)-10-formyltetrahydrofolate + H(+). It functions in the pathway one-carbon metabolism; tetrahydrofolate interconversion. Functionally, catalyzes the oxidation of 5,10-methylenetetrahydrofolate to 5,10-methenyltetrahydrofolate and then the hydrolysis of 5,10-methenyltetrahydrofolate to 10-formyltetrahydrofolate. The polypeptide is Bifunctional protein FolD (Clostridium beijerinckii (strain ATCC 51743 / NCIMB 8052) (Clostridium acetobutylicum)).